The primary structure comprises 505 residues: MGCWGRNRGRLLCMLALTFMFMVLEVVVSRVTSSLAMLSDSFHMLSDVLALVVALVAERFARRTHATQKNTFGWIRAEVMGALVNAIFLTGLCFAILLEAIERFVEPHEMQQPLVVLGVGVAGLLVNVLGLCLFHHHSGFSQDSGHSHSHGSHGHGLPKGPRVKSSRPGSNDINVAPGEQGPDQEETNTLVANTSNSNGLKLDPADPEKPRSGDTVEVQVNGNLIREPDHVELEEDRAGQLNMRGVFLHVLGDALGSVIVVVNALVFYFSWKGCSEGDFCVNPCFPDPCKAFVEIINSTHASVYEAGPCWVLYLDPTLCVVMVCILLYTTYPLLKESALILLQTVPKQIDIRNLIKELRNVEGVEEVHELHVWQLAGSRIIATAHIKCEDPTSYMEVAKTIKDVFHNHGIHATTIQPEFASVGSKSSVVPCELACRTQCALKQCCGTLPQAHSGKDAEKTPTVSISCLELSNNLEKKPRRTKAENIPAVVIEIKNMPNKQPESSL.

The Cytoplasmic portion of the chain corresponds to 1 to 10 (MGCWGRNRGR). A helical membrane pass occupies residues 11–31 (LLCMLALTFMFMVLEVVVSRV). The Extracellular portion of the chain corresponds to 32 to 35 (TSSL). A helical membrane pass occupies residues 36–56 (AMLSDSFHMLSDVLALVVALV). H43 and D47 together coordinate Zn(2+). The Cytoplasmic portion of the chain corresponds to 57–80 (AERFARRTHATQKNTFGWIRAEVM). The chain crosses the membrane as a helical span at residues 81 to 101 (GALVNAIFLTGLCFAILLEAI). Residues 102–113 (ERFVEPHEMQQP) lie on the Extracellular side of the membrane. The chain crosses the membrane as a helical span at residues 114–134 (LVVLGVGVAGLLVNVLGLCLF). The Cytoplasmic portion of the chain corresponds to 135-246 (HHHSGFSQDS…RAGQLNMRGV (112 aa)). Residues 142–215 (QDSGHSHSHG…DPEKPRSGDT (74 aa)) are disordered. Over residues 187–199 (TNTLVANTSNSNG) the composition is skewed to polar residues. The segment covering 203 to 214 (DPADPEKPRSGD) has biased composition (basic and acidic residues). Residues 247–267 (FLHVLGDALGSVIVVVNALVF) traverse the membrane as a helical segment. Residues H249 and D253 each contribute to the Zn(2+) site. Topologically, residues 268–306 (YFSWKGCSEGDFCVNPCFPDPCKAFVEIINSTHASVYEA) are extracellular. N297 carries N-linked (GlcNAc...) asparagine glycosylation. Residues 307-327 (GPCWVLYLDPTLCVVMVCILL) form a helical membrane-spanning segment. Residues 328–505 (YTTYPLLKES…MPNKQPESSL (178 aa)) are Cytoplasmic-facing. S504 bears the Phosphoserine mark.

Belongs to the cation diffusion facilitator (CDF) transporter (TC 2.A.4) family. SLC30A subfamily. In terms of assembly, homodimer. Interacts with TMEM163. Interacts and forms a complex with TMC6 and TMC8; the interaction regulates zinc transport into the ER.

It is found in the cell membrane. The protein localises to the basolateral cell membrane. Its subcellular location is the cytoplasmic vesicle membrane. The protein resides in the cytoplasm. It localises to the endoplasmic reticulum membrane. It is found in the golgi apparatus membrane. The protein localises to the nucleus membrane. It carries out the reaction Zn(2+)(in) + 2 H(+)(out) = Zn(2+)(out) + 2 H(+)(in). Zinc ion:proton antiporter that could function at the plasma membrane mediating zinc efflux from cells against its electrochemical gradient protecting them from intracellular zinc accumulation and toxicity. Alternatively, could prevent the transport to the plasma membrane of CACNB2, the L-type calcium channels regulatory subunit, through a yet to be defined mechanism. By modulating the expression of these channels at the plasma membrane, could prevent calcium and zinc influx into cells. By the same mechanism, could also prevent L-type calcium channels-mediated heavy metal influx into cells. In some cells, could also function as a zinc ion:proton antiporter mediating zinc entry into the lumen of cytoplasmic vesicles. In macrophages, can increase zinc ions concentration into the lumen of cytoplasmic vesicles containing engulfed bacteria and could help inactivate them. Forms a complex with TMC6/EVER1 and TMC8/EVER2 at the ER membrane of keratynocytes which facilitates zinc uptake into the ER. Down-regulates the activity of transcription factors induced by zinc and cytokines. This Macaca fascicularis (Crab-eating macaque) protein is Proton-coupled zinc antiporter SLC30A1.